Here is a 638-residue protein sequence, read N- to C-terminus: Growth hormone receptor (638 aa).

The first 18 residues, 1 to 18 (MDLWQLLLTVALAGSSDA), serve as a signal peptide directing secretion. At 19 to 264 (FSGSEATPAT…SPFTCEEDFR (246 aa)) the chain is on the extracellular side. The disordered stretch occupies residues 30–51 (GRASESVQRVHPGLGTNSSGKP). N-linked (GlcNAc...) asparagine glycosylation occurs at N46. 2 disulfide bridges follow: C56/C66 and C101/C112. N115 is a glycosylation site (N-linked (GlcNAc...) asparagine). An intrachain disulfide couples C126 to C140. Residues 151–254 (PPIGLNWTLL…EVLYVTLPQM (104 aa)) enclose the Fibronectin type-III domain. N-linked (GlcNAc...) asparagine glycosylation is found at N156, N161, and N200. Positions 240-244 (YGEFS) match the WSXWS motif motif. The required for ADAM17-mediated proteolysis stretch occupies residues 260–262 (EED). Residues 265–288 (FPWFLIIIFGIFGLTVMLFVFIFS) form a helical membrane-spanning segment. Topologically, residues 289-638 (KQQRIKMLIL…STDQLNKILP (350 aa)) are cytoplasmic. The tract at residues 294-379 (KMLILPPVPV…HQKSLSVLAA (86 aa)) is required for JAK2 binding. The Box 1 motif signature appears at 297-305 (ILPPVPVPK). The UbE motif motif lies at 340–349 (DSWVEFIELD). S341 is subject to Phosphoserine. Residue Y487 is modified to Phosphotyrosine. The tract at residues 573–592 (TTTAERSGTAEDAPGSEMPV) is disordered. Y595 is modified (phosphotyrosine).

The protein belongs to the type I cytokine receptor family. Type 1 subfamily. On growth hormone (GH) binding, forms homodimers and binds JAK2 via a box 1-containing domain. The soluble form (GHBP) is produced by phorbol ester-promoted proteolytic cleavage at the cell surface (shedding) by ADAM17/TACE. Shedding is inhibited by growth hormone (GH) binding to the receptor probably due to a conformational change in GHR rendering the receptor inaccessible to ADAM17. In terms of processing, on GH binding, phosphorylated on tyrosine residues in the cytoplasmic domain by JAK2. Post-translationally, ubiquitinated by the ECS(SOCS2) complex following ligand-binding and phosphorylation by JAK2, leading to its degradation by the proteasome. Regulation by the ECS(SOCS2) complex acts as a negative feedback loop of growth hormone receptor signaling. Ubiquitination is not sufficient for GHR internalization.

It localises to the cell membrane. Its subcellular location is the secreted. Receptor for pituitary gland growth hormone involved in regulating postnatal body growth. On ligand binding, couples to, and activates the JAK2/STAT5 pathway. In terms of biological role, the soluble form acts as a reservoir of growth hormone in plasma and may be a modulator/inhibitor of GH signaling. This Oryctolagus cuniculus (Rabbit) protein is Growth hormone receptor.